A 475-amino-acid chain; its full sequence is Ribulose bisphosphate carboxylase large chain (475 aa).

Residues Asn-123 and Thr-173 each coordinate substrate. The active-site Proton acceptor is the Lys-175. Lys-177 is a substrate binding site. Mg(2+)-binding residues include Lys-201, Asp-203, and Glu-204. Lys-201 carries the N6-carboxylysine modification. The active-site Proton acceptor is the His-294. Substrate contacts are provided by Arg-295, His-327, and Ser-379.

The protein belongs to the RuBisCO large chain family. Type I subfamily. In terms of assembly, heterohexadecamer of 8 large chains and 8 small chains. It depends on Mg(2+) as a cofactor.

The protein localises to the plastid. The protein resides in the cyanelle. It catalyses the reaction 2 (2R)-3-phosphoglycerate + 2 H(+) = D-ribulose 1,5-bisphosphate + CO2 + H2O. The enzyme catalyses D-ribulose 1,5-bisphosphate + O2 = 2-phosphoglycolate + (2R)-3-phosphoglycerate + 2 H(+). In terms of biological role, ruBisCO catalyzes two reactions: the carboxylation of D-ribulose 1,5-bisphosphate, the primary event in carbon dioxide fixation, as well as the oxidative fragmentation of the pentose substrate in the photorespiration process. Both reactions occur simultaneously and in competition at the same active site. This Cyanophora paradoxa protein is Ribulose bisphosphate carboxylase large chain.